The primary structure comprises 299 residues: Taste receptor type 2 member 1 (299 aa).

The Extracellular portion of the chain corresponds to 1–9 (MLESHLIIY). Residues 10 to 30 (FLLAVIQFLLGTFTNGIIVVV) traverse the membrane as a helical segment. At 31–55 (NGIDLIKHRKMAPLDLLLSCLAVSR) the chain is on the cytoplasmic side. A helical transmembrane segment spans residues 56–76 (IFLQLFIFYINVVVIFLIEFI). Topologically, residues 77–81 (TCSAS) are extracellular. Residues 82–102 (CAFLVFVNELELWLATWLGVF) traverse the membrane as a helical segment. Over 103 to 124 (YCAKVASVLHPLFIWLKMRISK) the chain is Cytoplasmic. Residues 125–145 (SVPWMILGSLLYVSMICIFHI) form a helical membrane-spanning segment. Residues 146-178 (KYTGFMVPYFLRNLFFQNATIQTEVKQAIQIFS) lie on the Extracellular side of the membrane. N-linked (GlcNAc...) asparagine glycosylation occurs at Asn-163. Residues 179–199 (FVAELLVPLLIFLVAVLLLIF) traverse the membrane as a helical segment. The Cytoplasmic segment spans residues 200–222 (SLGRHTRQMRNTVAGSRVPGRGA). A helical transmembrane segment spans residues 223–243 (HISALLSILSFLILYISHYLI). At 244–257 (KTFLSSLKFHVKRF) the chain is on the extracellular side. Residues 258 to 278 (VFLFCILVIGTYPSGHSLILI) form a helical membrane-spanning segment. Residues 279–299 (LGNPKLKQNTKKFLCHSKCCQ) are Cytoplasmic-facing.

The protein belongs to the G-protein coupled receptor T2R family.

The protein localises to the membrane. Receptor that may play a role in the perception of bitterness and is gustducin-linked. May play a role in sensing the chemical composition of the gastrointestinal content. The activity of this receptor may stimulate alpha gustducin, mediate PLC-beta-2 activation and lead to the gating of TRPM5. In Chlorocebus aethiops (Green monkey), this protein is Taste receptor type 2 member 1 (TAS2R1).